The primary structure comprises 71 residues: Peptide Ctri9819 (71 aa).

The N-terminal stretch at 1–23 is a signal peptide; sequence MKTVSTVAILAIFLLIVITTIET. Leu-34 is modified (leucine amide). A propeptide spanning residues 38–71 is cleaved from the precursor; sequence SKLETFKRIARTLSAGISAKRSLEDVNSLTGMSS.

It belongs to the non-disulfide-bridged peptide (NDBP) superfamily. Short antimicrobial peptide (group 4) family. As to expression, expressed by the venom gland.

Its subcellular location is the secreted. Antimicrobial peptide. The chain is Peptide Ctri9819 from Chaerilus tricostatus (Scorpion).